Reading from the N-terminus, the 60-residue chain is Large ribosomal subunit protein bL32 (60 aa).

Residues 1-20 (MAKPARHTSKAKRNKRRTHY) are compositionally biased toward basic residues. Residues 1-22 (MAKPARHTSKAKRNKRRTHYKL) form a disordered region.

The protein belongs to the bacterial ribosomal protein bL32 family.

The protein is Large ribosomal subunit protein bL32 of Streptococcus agalactiae serotype V (strain ATCC BAA-611 / 2603 V/R).